Here is a 443-residue protein sequence, read N- to C-terminus: Leucine-rich repeat-containing protein 17 (443 aa).

Residues 1 to 15 form the signal peptide; it reads MRIVAILLLFCLCRA. The interval 20–48 is disordered; the sequence is KSSPGVLRSQGNPSRSHGRGGRRGSSPVK. 3 LRR repeats span residues 84 to 105, 108 to 129, and 132 to 153; these read DLLH…MFAK, RLKS…AFFG, and KLTT…AFIY. An LRRCT 1 domain is found at 165–216; it reads NPWHCTCELETLISMLQIPRNRNLGNYAKCGSPPALRNKKLLQLKPQELCDE. The region spanning 229–270 is the LRRNT domain; sequence SGIPAVIRPEADSTLCHNYVFPIQTLDCKRKELKKVPSNIPP. 3 LRR repeats span residues 271-292, 295-316, and 319-342; these read DIVK…EFED, ELKK…AFLG, and HLEE…EDLY. One can recognise an LRRCT 2 domain in the interval 352–404; sequence NPWRCDYSIHYLYYWLKHHYNVHYNGLECKTPEEYKGWSVGKYVRSYYEECPK.

Expressed in osteoblasts, spleen, lung and heart.

It is found in the secreted. Its subcellular location is the extracellular space. Functionally, involved in bone homeostasis. Acts as a negative regulator of RANKL-induced osteoclast precursor differentiation from bone marrow precursors. This is Leucine-rich repeat-containing protein 17 (Lrrc17) from Mus musculus (Mouse).